Here is a 277-residue protein sequence, read N- to C-terminus: DNA-binding transcriptional activator MhpR (277 aa).

An HTH iclR-type domain is found at 12–74 (VRGLTRGLML…PSDDSFRLTI (63 aa)). The segment at residues 34–53 (VGLLAELSGLHRTTVRRLLE) is a DNA-binding region (H-T-H motif). The 174-residue stretch at 89–262 (ISALAAPLLG…AKQIEEGVES (174 aa)) folds into the IclR-ED domain.

In terms of biological role, activator of the mhpABCDFE operon coding for components of the 3-hydroxyphenylpropionate degradation pathway. In Escherichia coli (strain K12), this protein is DNA-binding transcriptional activator MhpR (mhpR).